Reading from the N-terminus, the 738-residue chain is Ethylene receptor (738 aa).

3 helical membrane passes run 23 to 43, 54 to 74, and 92 to 112; these read ISDF…IYFV, VLVQ…INLW, and VLTA…IPDL. Cu cation contacts are provided by cysteine 65 and histidine 69. Positions 158-307 constitute a GAF domain; sequence DRHTILKTTL…VVADQVAVAL (150 aa). The region spanning 350–589 is the Histidine kinase domain; that stretch reads VMNHEMRTPM…IFIVKLGFAE (240 aa). Histidine 353 bears the Phosphohistidine; by autocatalysis mark. Residues 612 to 729 form the Response regulatory domain; sequence PGLKVLVMDD…KMRSVLSELL (118 aa). Aspartate 660 carries the 4-aspartylphosphate modification.

Belongs to the ethylene receptor family. As to quaternary structure, homodimer; disulfide-linked. Cu cation serves as cofactor. Activation probably requires a transfer of a phosphate group between a His in the transmitter domain and an Asp of the receiver domain.

The protein localises to the endoplasmic reticulum membrane. It catalyses the reaction ATP + protein L-histidine = ADP + protein N-phospho-L-histidine.. Its function is as follows. May act early in the ethylene signal transduction pathway, possibly as an ethylene receptor, or as a regulator of the pathway. The chain is Ethylene receptor (ETR1) from Prunus persica (Peach).